A 143-amino-acid polypeptide reads, in one-letter code: 3-dehydroquinate dehydratase (143 aa).

Tyrosine 22 serves as the catalytic Proton acceptor. Substrate is bound by residues asparagine 73, histidine 79, and aspartate 86. Residue histidine 99 is the Proton donor of the active site. Substrate is bound by residues 100-101 and arginine 110; that span reads LS.

This sequence belongs to the type-II 3-dehydroquinase family. In terms of assembly, homododecamer.

The catalysed reaction is 3-dehydroquinate = 3-dehydroshikimate + H2O. It participates in metabolic intermediate biosynthesis; chorismate biosynthesis; chorismate from D-erythrose 4-phosphate and phosphoenolpyruvate: step 3/7. In terms of biological role, catalyzes a trans-dehydration via an enolate intermediate. This is 3-dehydroquinate dehydratase from Salinispora tropica (strain ATCC BAA-916 / DSM 44818 / JCM 13857 / NBRC 105044 / CNB-440).